We begin with the raw amino-acid sequence, 516 residues long: MSGINGAGPSNFFWRWRADDEPVTERERDSSSGANLTNSPQLRPESPTVSGRRLLRSNALSRQTREWQETTSASAERATPPVEPRQPPEAQPAERIVAERIVQELVRAGANLNNVRTMLRNVMDNNAVAFSRVEWNILLQHFPDMHTNGISSDSVLANELRQTLRQVVHQQRTQRALAPILSPAPSRPVASSSRSSQRTLLGRFTGWMAPRQTSSSSQATSSTSVDRHPQDLNQLESLRLADAERRNRSANQTDTDEALRRLTQAGVDMERLSTSLGRYIHSFQPAPPDLRRLLESVGIDPDIPEELTLVNNPVLNLNVALNRMLASRQATTESSSVFPSRAGDTRVRTLPVMPEREDNENNVAYGVRLLRLNPEAEVERVVEAFITDPSSRPEVVADIHAVLRSITSQFRQLRTISKADAESQDFRDAADYPDDPTSCLFGEDLSLSNPHQQVIGLAGESTDILQPYSQEGNKALRFMDMKKLAEHLASKPVHPMNRDRLDDKNIAGYAFRVVPD.

Disordered stretches follow at residues 1 to 93 (MSGI…AQPA) and 175 to 259 (RALA…DEAL). Residues 16-30 (WRADDEPVTERERDS) are compositionally biased toward basic and acidic residues. Positions 31–41 (SSGANLTNSPQ) are enriched in polar residues. The segment covering 81-90 (PVEPRQPPEA) has biased composition (pro residues). Low complexity-rich tracts occupy residues 183–196 (PAPS…SRSS) and 212–224 (QTSS…SSTS).

It belongs to the HopAB family.

The protein localises to the secreted. Its function is as follows. Effector protein that plays different roles depending on the species and plant cultivars that interact with the pathogen. Acts as a virulence determinant by enhancing the development of disease symptoms and bacterial growth. Acts as an avirulence factor by eliciting hypersensitive response (HR) and plant resistance. This is Effector protein hopAB1 (hopAB1) from Pseudomonas syringae pv. syringae (strain B728a).